We begin with the raw amino-acid sequence, 634 residues long: Chaperone protein HtpG (634 aa).

The interval 1-342 is a; substrate-binding; it reads MSVETQKETL…SNDLSLNVSR (342 aa). The b stretch occupies residues 343–559; sequence EILQKDPVID…EQDLGLQMRQ (217 aa). Positions 560 to 634 are c; the sequence is ILEASGQKVP…LNKLLVELSA (75 aa).

This sequence belongs to the heat shock protein 90 family. In terms of assembly, homodimer.

Its subcellular location is the cytoplasm. Functionally, molecular chaperone. Has ATPase activity. The sequence is that of Chaperone protein HtpG from Pseudomonas paraeruginosa (strain DSM 24068 / PA7) (Pseudomonas aeruginosa (strain PA7)).